Reading from the N-terminus, the 1032-residue chain is Toll-like receptor 9 (1032 aa).

Positions 1-25 (MGPCRGALHPLSLLVQAAALALALA) are cleaved as a signal peptide. Over 26 to 815 (QGTLPAFLPC…QDLRLCLDEA (790 aa)) the chain is Extracellular. Cys-35 and Cys-45 are oxidised to a cystine. 47–51 (WLFLK) serves as a coordination point for DNA. 26 LRR repeats span residues 62–85 (RGNV…DFVH), 87–110 (VHLR…HFPC), 122–147 (VPTL…SLVS), 150–166 (LSRT…LAGL), 167–190 (YALR…ALQV), 198–221 (LGNL…LPPS), 223–242 (EYLL…DLAN), 243–268 (LTAL…CREC), 283–306 (LSHL…WFHG), 308–332 (GNLM…AFYG), 333–356 (LARL…HLHL), 363–386 (LLSL…TLQS), 390–413 (LPML…IFGA), 415–440 (PGLR…TGEV), 472–496 (CRTL…MFVR), 498–521 (ARLQ…QFVP), 522–545 (LSNL…SFTE), 547–574 (PRLE…SFVA), 576–600 (LPAL…LRSA), 602–624 (LRAL…LYLR), 629–652 (LRSL…NLDN), 654–677 (PKSL…SLAL), 678–701 (LPKL…SLPN), 703–725 (TQLQ…FFAL), 726–749 (AVRL…WFGS), and 751–774 (AGAL…TFVD). A glycan (N-linked (GlcNAc...) asparagine) is linked at Asn-64. DNA contacts are provided by residues 72-77 (SNRIHH) and 95-109 (KWNC…MHFP). A disulfide bond links Cys-98 and Cys-110. Asn-129 carries an N-linked (GlcNAc...) asparagine glycan. Residues Tyr-132, Arg-152, and 179-181 (YYK) contribute to the DNA site. Cysteines 178 and 184 form a disulfide. Asn-200 is a glycosylation site (N-linked (GlcNAc...) asparagine). Tyr-208 is a binding site for DNA. Residues Asn-210 and Asn-242 are each glycosylated (N-linked (GlcNAc...) asparagine). Disulfide bonds link Cys-255/Cys-268 and Cys-258/Cys-265. Cys-258 carries S-palmitoyl cysteine lipidation. Arg-262 contributes to the DNA binding site. Cys-265 is lipidated: S-palmitoyl cysteine. The N-linked (GlcNAc...) asparagine glycan is linked to Asn-340. Cys-472 and Cys-502 are disulfide-bonded. Asn-476 and Asn-515 each carry an N-linked (GlcNAc...) asparagine glycan. N-linked (GlcNAc...) asparagine glycosylation occurs at Asn-569. 3 N-linked (GlcNAc...) asparagine glycosylation sites follow: Asn-671, Asn-696, and Asn-701. Asn-733 carries an N-linked (GlcNAc...) asparagine glycan. Cystine bridges form between Cys-766-Cys-792 and Cys-768-Cys-811. The chain crosses the membrane as a helical span at residues 816–836 (LSWVCFSLSLLAVALSLAVPM). Residues 837–1032 (LHQLCGWDLW…QNFCRGPTTA (196 aa)) lie on the Cytoplasmic side of the membrane. In terms of domain architecture, TIR spans 868-1013 (LAYDAFVVFD…SFWAQLGTAL (146 aa)).

This sequence belongs to the Toll-like receptor family. Monomer and homodimer. Exists as a monomer in the absence of unmethylated cytidine-phosphate-guanosine (CpG) ligand. Proteolytic processing of an insertion loop (Z-loop) is required for homodimerization upon binding to the unmethylated CpG ligand leading to its activation. Interacts with MYD88 via their respective TIR domains. Interacts with BTK. Interacts (via transmembrane domain) with UNC93B1. Interacts with CD300LH; the interaction may promote full activation of TLR9-triggered innate responses. Interacts with CNPY3 and HSP90B1; this interaction is required for proper folding in the endoplasmic reticulum. Interacts with SMPDL3B. Interacts with CD82; this interaction is essential for TLR9-dependent myddosome formation in response to CpG stimulation. Activated by proteolytic cleavage of the flexible loop between repeats LRR14 and LRR15 within the ectodomain. Cleavage requires UNC93B1. Proteolytically processed by first removing the majority of the ectodomain by either asparagine endopeptidase (AEP) or a cathepsin followed by a trimming event that is solely cathepsin mediated and required for optimal receptor signaling. Post-translationally, palmitoylated by ZDHHC3 in the Golgi regulates TLR9 trafficking from the Golgi to endosomes. Depalmitoylation by PPT1 controls the release of TLR9 from UNC93B1 in endosomes.

It localises to the endoplasmic reticulum membrane. The protein resides in the endosome. Its subcellular location is the lysosome. The protein localises to the cytoplasmic vesicle. It is found in the phagosome. Its function is as follows. Key component of innate and adaptive immunity. TLRs (Toll-like receptors) control host immune response against pathogens through recognition of molecular patterns specific to microorganisms. TLR9 is a nucleotide-sensing TLR which is activated by unmethylated cytidine-phosphate-guanosine (CpG) dinucleotides. Acts via MYD88 and TRAF6, leading to NF-kappa-B activation, cytokine secretion and the inflammatory response. Upon CpG stimulation, induces B-cell proliferation, activation, survival and antibody production. In Canis lupus familiaris (Dog), this protein is Toll-like receptor 9 (TLR9).